The sequence spans 89 residues: Dynein light chain 2, cytoplasmic (89 aa).

This sequence belongs to the dynein light chain family.

The protein localises to the cytoplasm. It is found in the cytoskeleton. Acts as a non-catalytic accessory component of a dynein complex. This is Dynein light chain 2, cytoplasmic (Cdlc2) from Drosophila melanogaster (Fruit fly).